Consider the following 79-residue polypeptide: Cytochrome b (79 aa).

The next 3 membrane-spanning stretches (helical) occupy residues 1–7 (TAMFLAM), 31–52 (WLIR…YLHI), and 67–79 (WNVG…LTMM). Positions 37 and 51 each coordinate heme b.

Belongs to the cytochrome b family. The cytochrome bc1 complex contains 3 respiratory subunits (MT-CYB, CYC1 and UQCRFS1), 2 core proteins (UQCRC1 and UQCRC2) and probably 6 low-molecular weight proteins. Heme b is required as a cofactor.

It localises to the mitochondrion inner membrane. Component of the ubiquinol-cytochrome c reductase complex (complex III or cytochrome b-c1 complex) that is part of the mitochondrial respiratory chain. The b-c1 complex mediates electron transfer from ubiquinol to cytochrome c. Contributes to the generation of a proton gradient across the mitochondrial membrane that is then used for ATP synthesis. The chain is Cytochrome b (mt-cyb) from Hypsophrys nicaraguensis (Moga).